A 110-amino-acid chain; its full sequence is UPF0060 membrane protein Mfla_2554 (110 aa).

4 helical membrane passes run 7 to 27 (VALFVITALAEIIGCYLPYLW), 33 to 53 (SPLLLIPAAISLALFAWLLTL), 61 to 81 (VYAAYGGVYIFVAIFWLWVVD), and 83 to 103 (IIPSNWDFLGASVALLGMAII).

Belongs to the UPF0060 family.

The protein resides in the cell inner membrane. This chain is UPF0060 membrane protein Mfla_2554, found in Methylobacillus flagellatus (strain ATCC 51484 / DSM 6875 / VKM B-1610 / KT).